The chain runs to 652 residues: RNA-binding KH domain-containing protein RCF3 (652 aa).

Positions Met-1–Gln-14 are enriched in basic and acidic residues. The segment at Met-1–Glu-63 is disordered. The span at Phe-34–Gly-55 shows a compositional bias: gly residues. KH domains follow at residues Thr-67–Leu-139 and Arg-175–Val-245. The interval Gln-253 to Tyr-307 is disordered. Over residues Arg-292–Asn-306 the composition is skewed to low complexity. 3 consecutive KH domains span residues Glu-324 to Leu-391, Leu-408 to Leu-476, and Arg-576 to Leu-640.

As to quaternary structure, homodimer. Interacts with CPL1. Interacts with RS40 and RS41. Interacts with DRB1/HYL1 and SE. Interacts with CPL2. In terms of tissue distribution, expressed in roots, cotyledons, leaves, flowers and siliques.

The protein resides in the nucleus. Its subcellular location is the nucleus speckle. Its function is as follows. Acts as a negative regulator of osmotic stress-induced gene expression. Involved in the regulation of thermotolerance responses under heat stress. Functions as an upstream regulator of heat stress transcription factor (HSF) genes. Negatively regulates HSFA1A, HSFA1B and HSFA1D, but positively controls the expression of HSFA1E, HSFA3, HSFA9, HSFB3, and DREB2C. Forms a complex with CPL1 that modulates co-transcriptional processes such as mRNA capping and polyadenylation, and functions to repress stress-inducible gene expression. Regulates pre-mRNA processing under salt stress. Involved in primary miRNA processing and pri-miRNA biogenesis. Binds both intronless and intron-containing pri-miRNAs. Acts as a regulator of biotic stress response gene expression and basal JA-mediated responses involved in defense. Acts as a negative regulator of resistance to the fungal pathogen Fusarium oxysporum. The polypeptide is RNA-binding KH domain-containing protein RCF3 (Arabidopsis thaliana (Mouse-ear cress)).